The primary structure comprises 622 residues: Basic helix-loop-helix ARNT-like protein 2 (622 aa).

Residues 1 to 10 (MAEAGVGSAE) show a composition bias toward low complexity. Disordered stretches follow at residues 1 to 29 (MAEA…DGNS) and 41 to 86 (PITK…EDEE). Residues 45–54 (PATTSFNNSV) show a composition bias toward polar residues. Acidic residues predominate over residues 67–76 (DNQDTVEVDG). The segment covering 77–86 (DPQKRNEDEE) has biased composition (basic and acidic residues). Residues 92 to 145 (DFREAHSQTEKRRRDKMNNLIEELSAMIPQCNPMARKLDKLTVLRMAVQHLKSL) enclose the bHLH domain. PAS domains are found at residues 163 to 235 (KDDE…DVSP) and 342 to 412 (VPQK…LQNK). The 44-residue stretch at 417–460 (TNSYKFRAKDGSFITLKSQWFSFMNPWTKELEYIVSNNTVVLGH) folds into the PAC domain.

In terms of assembly, component of the circadian core oscillator, which includes the CRY proteins, CLOCK, or NPAS2, BMAL1 or BMAL2, CSNK1D and/or CSNK1E, TIMELESS and the PER proteins. Interacts directly with CLOCK to form the BMAL2-CLOCK transactivator. Can form heterodimers or homodimers which interact directly with CLOCK to form the transcription activator. Expressed in the pineal gland.

The protein localises to the nucleus. Its function is as follows. Transcriptional activator which forms a core component of the circadian clock. The circadian clock, an internal time-keeping system, regulates various physiological processes through the generation of approximately 24 hour circadian rhythms in gene expression, which are translated into rhythms in metabolism and behavior. It is derived from the Latin roots 'circa' (about) and 'diem' (day) and acts as an important regulator of a wide array of physiological functions including metabolism, sleep, body temperature, blood pressure, endocrine, immune, cardiovascular, and renal function. Consists of two major components: the central clock, residing in the suprachiasmatic nucleus (SCN) of the brain, and the peripheral clocks that are present in nearly every tissue and organ system. Both the central and peripheral clocks can be reset by environmental cues, also known as Zeitgebers (German for 'timegivers'). The predominant Zeitgeber for the central clock is light, which is sensed by retina and signals directly to the SCN. The central clock entrains the peripheral clocks through neuronal and hormonal signals, body temperature and feeding-related cues, aligning all clocks with the external light/dark cycle. Circadian rhythms allow an organism to achieve temporal homeostasis with its environment at the molecular level by regulating gene expression to create a peak of protein expression once every 24 hours to control when a particular physiological process is most active with respect to the solar day. Transcription and translation of core clock components (CLOCK, NPAS2, BMAL1, BMAL2, PER1, PER2, PER3, CRY1 and CRY2) plays a critical role in rhythm generation, whereas delays imposed by post-translational modifications (PTMs) are important for determining the period (tau) of the rhythms (tau refers to the period of a rhythm and is the length, in time, of one complete cycle). A diurnal rhythm is synchronized with the day/night cycle, while the ultradian and infradian rhythms have a period shorter and longer than 24 hours, respectively. Disruptions in the circadian rhythms contribute to the pathology of cardiovascular diseases, cancer, metabolic syndromes and aging. A transcription/translation feedback loop (TTFL) forms the core of the molecular circadian clock mechanism. Transcription factors, CLOCK or NPAS2 and BMAL1 or BMAL2, form the positive limb of the feedback loop, act in the form of a heterodimer and activate the transcription of core clock genes and clock-controlled genes (involved in key metabolic processes), harboring E-box elements (5'-CACGTG-3') within their promoters. The core clock genes: PER1/2/3 and CRY1/2 which are transcriptional repressors form the negative limb of the feedback loop and interact with the CLOCK|NPAS2-BMAL1|BMAL2 heterodimer inhibiting its activity and thereby negatively regulating their own expression. This heterodimer also activates nuclear receptors NR1D1/2 and RORA/B/G, which form a second feedback loop and which activate and repress BMAL1 transcription, respectively. The preferred binding motif for the CLOCK-BMAL1 heterodimer is 5'-CACGTGA-3', which contains a flanking adenine nucleotide at the 3-prime end of the canonical 6-nucleotide E-box sequence. CLOCK specifically binds to the half-site 5'-CAC-3', while BMAL1 binds to the half-site 5'-GTGA-3'. This is Basic helix-loop-helix ARNT-like protein 2 (BMAL2) from Gallus gallus (Chicken).